Here is a 96-residue protein sequence, read N- to C-terminus: Integration host factor subunit beta (96 aa).

The tract at residues 59–86 (RVGRNPKTGETVELDGKHVPHFKPGKEL) is disordered. Over residues 72-86 (LDGKHVPHFKPGKEL) the composition is skewed to basic and acidic residues.

The protein belongs to the bacterial histone-like protein family. In terms of assembly, heterodimer of an alpha and a beta chain.

This protein is one of the two subunits of integration host factor, a specific DNA-binding protein that functions in genetic recombination as well as in transcriptional and translational control. The chain is Integration host factor subunit beta from Pseudoalteromonas atlantica (strain T6c / ATCC BAA-1087).